The sequence spans 366 residues: Flagellar P-ring protein (366 aa).

The signal sequence occupies residues 1–20 (MVIKFLSALILLLVTTAAQA).

It belongs to the FlgI family. In terms of assembly, the basal body constitutes a major portion of the flagellar organelle and consists of four rings (L,P,S, and M) mounted on a central rod.

The protein resides in the periplasm. It is found in the bacterial flagellum basal body. Functionally, assembles around the rod to form the L-ring and probably protects the motor/basal body from shearing forces during rotation. This chain is Flagellar P-ring protein, found in Escherichia coli (strain SE11).